The sequence spans 90 residues: Cuticle protein 9.5 (90 aa).

In terms of biological role, component of the cuticle of migratory locust which contains more than 100 different structural proteins. This chain is Cuticle protein 9.5, found in Locusta migratoria (Migratory locust).